The chain runs to 60 residues: UPF0434 protein ECA2555 (60 aa).

The protein belongs to the UPF0434 family.

The protein is UPF0434 protein ECA2555 of Pectobacterium atrosepticum (strain SCRI 1043 / ATCC BAA-672) (Erwinia carotovora subsp. atroseptica).